Here is a 445-residue protein sequence, read N- to C-terminus: Mannan endo-1,4-beta-mannosidase 2 (445 aa).

The first 27 residues, 1-27 (MAVGNGLILYHILGLASCIALVYFSLG), serve as a signal peptide directing secretion. Substrate is bound at residue Trp-110. The N-linked (GlcNAc...) asparagine glycan is linked to Asn-181. Asn-226 is a substrate binding site. The active-site Proton donor is Glu-227. Tyr-309 serves as a coordination point for substrate. The active-site Nucleophile is the Glu-349. Residue Trp-391 participates in substrate binding.

This sequence belongs to the glycosyl hydrolase 5 (cellulase A) family. Expressed in stems and seeds, and at lower levels in roots and leaves.

It localises to the secreted. It carries out the reaction Random hydrolysis of (1-&gt;4)-beta-D-mannosidic linkages in mannans, galactomannans and glucomannans.. The sequence is that of Mannan endo-1,4-beta-mannosidase 2 (MAN2) from Oryza sativa subsp. japonica (Rice).